Here is a 172-residue protein sequence, read N- to C-terminus: Endoribonuclease YbeY (172 aa).

Zn(2+) contacts are provided by His-137, His-141, and His-147.

Belongs to the endoribonuclease YbeY family. It depends on Zn(2+) as a cofactor.

It localises to the cytoplasm. In terms of biological role, single strand-specific metallo-endoribonuclease involved in late-stage 70S ribosome quality control and in maturation of the 3' terminus of the 16S rRNA. This is Endoribonuclease YbeY from Dehalococcoides mccartyi (strain ATCC BAA-2266 / KCTC 15142 / 195) (Dehalococcoides ethenogenes (strain 195)).